The primary structure comprises 288 residues: Bifunctional protein FolD (288 aa).

Residues 168–170 (GRG), Thr-195, and Val-236 each bind NADP(+).

This sequence belongs to the tetrahydrofolate dehydrogenase/cyclohydrolase family. Homodimer.

It carries out the reaction (6R)-5,10-methylene-5,6,7,8-tetrahydrofolate + NADP(+) = (6R)-5,10-methenyltetrahydrofolate + NADPH. The catalysed reaction is (6R)-5,10-methenyltetrahydrofolate + H2O = (6R)-10-formyltetrahydrofolate + H(+). The protein operates within one-carbon metabolism; tetrahydrofolate interconversion. Functionally, catalyzes the oxidation of 5,10-methylenetetrahydrofolate to 5,10-methenyltetrahydrofolate and then the hydrolysis of 5,10-methenyltetrahydrofolate to 10-formyltetrahydrofolate. This Mycobacterium sp. (strain JLS) protein is Bifunctional protein FolD.